The chain runs to 81 residues: Exodeoxyribonuclease 7 small subunit (81 aa).

It belongs to the XseB family. As to quaternary structure, heterooligomer composed of large and small subunits.

It localises to the cytoplasm. It carries out the reaction Exonucleolytic cleavage in either 5'- to 3'- or 3'- to 5'-direction to yield nucleoside 5'-phosphates.. In terms of biological role, bidirectionally degrades single-stranded DNA into large acid-insoluble oligonucleotides, which are then degraded further into small acid-soluble oligonucleotides. In Pasteurella multocida (strain Pm70), this protein is Exodeoxyribonuclease 7 small subunit.